Here is a 687-residue protein sequence, read N- to C-terminus: Chloride channel protein ClC-Kb (687 aa).

Topologically, residues 1-50 (MEEFVGLREGSSGNPVTLQELWGPCPRIRRGIRGGLEWLKQKLFRLGEDW) are cytoplasmic. The next 2 helical transmembrane spans lie at 51-82 (YFLM…QWLY) and 91-111 (LRYL…SGFS). The helical intramembrane region spans 116–127 (PSSGGSGIPEVK). Ser121 serves as a coordination point for chloride. Helical transmembrane passes span 141–160 (IKNF…CGST) and 161–180 (LFLG…AAYL). A glycan (N-linked (GlcNAc...) asparagine) is linked at Asn193. The helical intramembrane region spans 203–224 (AAAAVGVATVFAAPFSGVLFSI). A helical membrane pass occupies residues 236 to 255 (YWRGFFAATCGAFMFRLLAV). Positions 259, 261, 278, and 281 each coordinate Ca(2+). Helical transmembrane passes span 282–310 (IFFF…FGFI) and 325–342 (PVYS…TYPP). The segment at residues 349-360 (ASRLSMKQHLDS) is an intramembrane region (helical). Helical transmembrane passes span 400–420 (GTLA…TTIP) and 421–440 (MPAG…GRLF). Phe426 provides a ligand contact to chloride. The segment at residues 464–496 (GGYALAGAAAFSGAVTHTISTALLAFEVTGQIV) is an intramembrane region (helical). The chain crosses the membrane as a helical span at residues 500 to 520 (PVLMAVLAANAIAQSCQPSFY). Residues 521–687 (DGTVIVKKLP…SNLTNPPAPK (167 aa)) lie on the Cytoplasmic side of the membrane. CBS domains follow at residues 551-609 (MNHS…EPPS) and 626-684 (CPTE…TNPP).

It belongs to the chloride channel (TC 2.A.49) family. CLCNKB subfamily. In terms of assembly, homodimer. Interacts with BSND. In terms of processing, N-glycosylated.

The protein localises to the basolateral cell membrane. The enzyme catalyses chloride(in) = chloride(out). It catalyses the reaction iodide(out) = iodide(in). The catalysed reaction is nitrate(in) = nitrate(out). It carries out the reaction bromide(in) = bromide(out). Its activity is regulated as follows. Activated by extracellular Ca(2+) and inhibited by extracellular acidic pH. In terms of biological role, anion-selective channel permeable to small monovalent anions with ion selectivity for chloride &gt; bromide &gt; nitrate &gt; iodide. Forms a homodimeric channel where each subunit has its own ion conduction pathway. May conduct double-barreled currents controlled by two types of gates, two fast gates that control each subunit independently and a slow common gate that opens and shuts off both subunits simultaneously. Assembles with the regulatory subunit BSND/Barttin for sorting at the basolateral plasma membrane domain and functional switch to the ion conducting state. CLCNKB:BSND channels display mostly a linear current-voltage relationship controlled by common gate. Mediates chloride conductance along nephron segments, namely the thick ascending limb of Henle's loop, convoluted tubule and the collecting duct, contributing to the maintenance of systemic acid-base and electrolyte homeostasis. Conducts chloride currents in the stria vascularis of the inner ear to establish the endocochlear potential necessary for normal hearing. In Homo sapiens (Human), this protein is Chloride channel protein ClC-Kb.